A 709-amino-acid polypeptide reads, in one-letter code: Eukaryotic translation initiation factor 3 subunit B (709 aa).

The interval 1-98 (MSINEEEYLR…LFIQYKNVAD (98 aa)) is sufficient for interaction with HCR1 and TIF32. The interval 1–221 (MSINEEEYLR…GIQAWGGADF (221 aa)) is sufficient for interaction with PIC8. An RRM domain is found at 37 to 124 (NYVIVDGAPI…HRLLVNRLSD (88 aa)).

It belongs to the eIF-3 subunit B family. Component of the eukaryotic translation initiation factor 3 (eIF-3) complex.

The protein localises to the cytoplasm. RNA-binding component of the eukaryotic translation initiation factor 3 (eIF-3) complex, which is involved in protein synthesis of a specialized repertoire of mRNAs and, together with other initiation factors, stimulates binding of mRNA and methionyl-tRNAi to the 40S ribosome. The eIF-3 complex specifically targets and initiates translation of a subset of mRNAs involved in cell proliferation. The protein is Eukaryotic translation initiation factor 3 subunit B of Lodderomyces elongisporus (strain ATCC 11503 / CBS 2605 / JCM 1781 / NBRC 1676 / NRRL YB-4239) (Yeast).